The chain runs to 341 residues: Ribosomal RNA small subunit methyltransferase C (341 aa).

This sequence belongs to the methyltransferase superfamily. RsmC family. In terms of assembly, monomer.

The protein resides in the cytoplasm. It carries out the reaction guanosine(1207) in 16S rRNA + S-adenosyl-L-methionine = N(2)-methylguanosine(1207) in 16S rRNA + S-adenosyl-L-homocysteine + H(+). Its function is as follows. Specifically methylates the guanine in position 1207 of 16S rRNA in the 30S particle. The sequence is that of Ribosomal RNA small subunit methyltransferase C from Shewanella pealeana (strain ATCC 700345 / ANG-SQ1).